Consider the following 76-residue polypeptide: Theta defensin subunit C (76 aa).

An N-terminal signal peptide occupies residues methionine 1 to alanine 22. Residues arginine 23 to leucine 64 constitute a propeptide that is removed on maturation. Arginine 65 participates in a covalent cross-link: Cyclopeptide (Arg-Cys) (interchain with C-73 in subunit A); in form BTD-4. Residues cysteine 68 and cysteine 73 are joined by a disulfide bond. Residue cysteine 73 forms a Cyclopeptide (Cys-Arg) (interchain with R-65 in subunit A); in form BTD-4 linkage. The propeptide occupies arginine 74–leucine 76.

This sequence belongs to the alpha-defensin family. Theta subfamily. BTD-4 is a cyclic heterodimer composed of subunits A and C; disulfide-linked. Forms a cyclic peptide with subunit A (BTD-4). An additional intersubunit disulfide bond is formed.

Functionally, BTD-4 has antimicrobial activity against the Gram-negative bacterium E.coli ML35, the Gram-positive bacterium S.aureus 502a, and the fungus C.albicans 16820. This chain is Theta defensin subunit C (BTDC), found in Papio anubis (Olive baboon).